Reading from the N-terminus, the 288-residue chain is Homoserine kinase (288 aa).

78 to 88 (PLARGLGSSSS) is a binding site for ATP.

Belongs to the GHMP kinase family. Homoserine kinase subfamily.

It localises to the cytoplasm. It carries out the reaction L-homoserine + ATP = O-phospho-L-homoserine + ADP + H(+). The protein operates within amino-acid biosynthesis; L-threonine biosynthesis; L-threonine from L-aspartate: step 4/5. Catalyzes the ATP-dependent phosphorylation of L-homoserine to L-homoserine phosphate. This is Homoserine kinase from Streptococcus mutans serotype c (strain ATCC 700610 / UA159).